Here is a 287-residue protein sequence, read N- to C-terminus: Membrane protein insertase YidC 2 (287 aa).

The N-terminal stretch at 1–26 (MKKKKRFKQKLLIASLVIGLVAVLSG) is a signal peptide. The N-palmitoyl cysteine moiety is linked to residue Cys27. Cys27 carries the S-diacylglycerol cysteine lipid modification. The next 5 helical transmembrane spans lie at 65 to 85 (YAVGIIVVTILIRLLIMPLMI), 135 to 155 (MMGCLPLLIQMPILLGFYQAI), 178 to 198 (YILPIVAALTTFLSSKISMMG), 207 to 224 (AMIVYIMPVMILFMGITL), and 228 to 250 (LALYWIIGNIFTVFQTLLINNPF).

Belongs to the OXA1/ALB3/YidC family. Type 2 subfamily.

It localises to the cell membrane. Required for the insertion and/or proper folding and/or complex formation of integral membrane proteins into the membrane. Involved in integration of membrane proteins that insert both dependently and independently of the Sec translocase complex, as well as at least some lipoproteins. The sequence is that of Membrane protein insertase YidC 2 from Listeria innocua serovar 6a (strain ATCC BAA-680 / CLIP 11262).